We begin with the raw amino-acid sequence, 320 residues long: Heterogeneous nuclear ribonucleoprotein A1-like 2 (320 aa).

A globular A domain region spans residues 4–94; it reads SASPKEPEQL…EPKRAVSRED (91 aa). 2 positions are modified to phosphoserine: Ser6 and Ser22. RRM domains follow at residues 14 to 97 and 105 to 184; these read RKLF…DSQR and KKIF…LPKQ. Positions 95-185 are globular B domain; that stretch reads SQRPGAHLTV…EVRKALPKQE (91 aa). Residues 181–216 are disordered; that stretch reads LPKQEMASASSSQRGRRGSGNFGGGRGDGFGGNDNF. Asymmetric dimethylarginine; alternate occurs at positions 194, 206, 218, and 225. Residues Arg194, Arg206, Arg218, and Arg225 each carry the omega-N-methylarginine; alternate modification. Residues 198–216 show a composition bias toward gly residues; sequence GSGNFGGGRGDGFGGNDNF. An RNA-binding RGG-box region spans residues 218-240; it reads RGGNFSGRGGFGGSCGGGGYGGS. The tract at residues 268–305 is nuclear targeting sequence; it reads NQSSNFGPMKGGNFGGRSSGPYGGGGQYFAKPQNQGGY. The disordered stretch occupies residues 271–320; that stretch reads SNFGPMKGGNFGGRSSGPYGGGGQYFAKPQNQGGYGVSSSSSSYGSGRRF. Residues 276–294 are compositionally biased toward gly residues; the sequence is MKGGNFGGRSSGPYGGGGQ. An Omega-N-methylarginine modification is found at Arg284. Lys298 carries the N6-acetyllysine modification. The segment covering 307–320 has biased composition (low complexity); that stretch reads VSSSSSSYGSGRRF.

It is found in the nucleus. Its subcellular location is the cytoplasm. Involved in the packaging of pre-mRNA into hnRNP particles, transport of poly(A) mRNA from the nucleus to the cytoplasm and may modulate splice site selection. This chain is Heterogeneous nuclear ribonucleoprotein A1-like 2 (HNRNPA1L2), found in Homo sapiens (Human).